A 31-amino-acid polypeptide reads, in one-letter code: Photosystem II reaction center protein T (31 aa).

A helical membrane pass occupies residues 3–23; it reads SVAYILILTMALAVLFFAIAF.

The protein belongs to the PsbT family. In terms of assembly, PSII is composed of 1 copy each of membrane proteins PsbA, PsbB, PsbC, PsbD, PsbE, PsbF, PsbH, PsbI, PsbJ, PsbK, PsbL, PsbM, PsbT, PsbX, PsbY, PsbZ, Psb30/Ycf12, peripheral proteins PsbO, CyanoQ (PsbQ), PsbU, PsbV and a large number of cofactors. It forms dimeric complexes.

The protein resides in the cellular thylakoid membrane. In terms of biological role, found at the monomer-monomer interface of the photosystem II (PS II) dimer, plays a role in assembly and dimerization of PSII. PSII is a light-driven water plastoquinone oxidoreductase, using light energy to abstract electrons from H(2)O, generating a proton gradient subsequently used for ATP formation. The chain is Photosystem II reaction center protein T from Gloeothece citriformis (strain PCC 7424) (Cyanothece sp. (strain PCC 7424)).